The chain runs to 527 residues: Palmitoleoyl-protein carboxylesterase NOTUM (527 aa).

The first 19 residues, 1 to 19 (MKSYLILNTLLLSLLKING), serve as a signal peptide directing secretion. Residues asparagine 64, asparagine 86, and asparagine 104 are each glycosylated (N-linked (GlcNAc...) asparagine). Serine 203 (charge relay system) is an active-site residue. N-linked (GlcNAc...) asparagine glycosylation is present at asparagine 249. Residues aspartate 311 and histidine 359 each act as charge relay system in the active site. N-linked (GlcNAc...) asparagine glycosylation is present at asparagine 451.

It belongs to the pectinacetylesterase family. Notum subfamily. As to expression, expressed in the anterior pole.

Its subcellular location is the secreted. The catalysed reaction is [Wnt protein]-O-(9Z)-hexadecenoyl-L-serine + H2O = [Wnt protein]-L-serine + (9Z)-hexadecenoate + H(+). Functionally, carboxylesterase that acts as a key negative regulator of the Wnt signaling pathway. Acts by specifically mediating depalmitoleoylation of WNT proteins. Serine palmitoleoylation of WNT proteins is required for efficient binding to frizzled receptors. Promotes head regeneration following amputation by inhibiting the Wnt signaling pathway. The polypeptide is Palmitoleoyl-protein carboxylesterase NOTUM (Schmidtea mediterranea (Freshwater planarian flatworm)).